A 611-amino-acid chain; its full sequence is U-box domain-containing protein 12 (611 aa).

The 75-residue stretch at 227 to 301 (IIPDEFRCPI…SQWCEANGIE (75 aa)) folds into the U-box domain. 4 ARM repeats span residues 355–394 (VNNRICIAEAGAIPLLVNLLSSSDPRTQEHAVTALLNLSI), 396–435 (ENNKASIVDSHAIPKIVEVLKTGSMETRENAAATLFSLSV), 437–476 (DENKVTIGAAGAIPPLINLLCDGSPRGKKDAATAIFNLCI), and 478–517 (QGNKVRAVKAGIVIHLMNFLVDPTGGMIDEALSLLSILAG).

The enzyme catalyses S-ubiquitinyl-[E2 ubiquitin-conjugating enzyme]-L-cysteine + [acceptor protein]-L-lysine = [E2 ubiquitin-conjugating enzyme]-L-cysteine + N(6)-ubiquitinyl-[acceptor protein]-L-lysine.. It participates in protein modification; protein ubiquitination. Possesses E3 ubiquitin-protein ligase in vitro. The polypeptide is U-box domain-containing protein 12 (PUB12) (Oryza sativa subsp. japonica (Rice)).